The sequence spans 98 residues: Putative pterin-4-alpha-carbinolamine dehydratase (98 aa).

It belongs to the pterin-4-alpha-carbinolamine dehydratase family.

The enzyme catalyses (4aS,6R)-4a-hydroxy-L-erythro-5,6,7,8-tetrahydrobiopterin = (6R)-L-erythro-6,7-dihydrobiopterin + H2O. The protein is Putative pterin-4-alpha-carbinolamine dehydratase of Mesorhizobium japonicum (strain LMG 29417 / CECT 9101 / MAFF 303099) (Mesorhizobium loti (strain MAFF 303099)).